A 1248-amino-acid chain; its full sequence is ABC transporter B family member 7 (1248 aa).

Transmembrane regions (helical) follow at residues 32–52 (IVLMVIGTLSAMANGLTQPFM), 82–102 (FLYLAAYAGVVSFLQVSCWMV), 158–175 (FTQLVSSFVGGFTVAFIV), 179–201 (LTLALLPCVPLIVGTGGAMTYIM), 261–281 (GLGIGIMMVVVYCTYGFAIWY), and 299–321 (VITSILTGGMALGQTLPSLNSFA). An ABC transmembrane type-1 1 domain is found at 35–322 (MVIGTLSAMA…TLPSLNSFAA (288 aa)). The 237-residue stretch at 357 to 593 (IELRDVYFRY…PEGTYSQLVR (237 aa)) folds into the ABC transporter 1 domain. 392 to 399 (GQSGSGKS) serves as a coordination point for ATP. Residues asparagine 473 and asparagine 652 are each glycosylated (N-linked (GlcNAc...) asparagine). The helical transmembrane segment at 682 to 702 (VLLLGSLAAVIHGIVFPVQGL) threads the bilayer. Residues 683–970 (LLLGSLAAVI…TSTMAPDINK (288 aa)) form the ABC transmembrane type-1 2 domain. Residue asparagine 720 is glycosylated (N-linked (GlcNAc...) asparagine). The helical transmembrane segment at 722 to 742 (SLFWALIFVALGLTDLIVIPL) threads the bilayer. N-linked (GlcNAc...) asparagine glycosylation is present at asparagine 779. A run of 4 helical transmembrane segments spans residues 813-833 (IIGAFIIAFTANWLLALMALL), 834-854 (VAPVMFFQGYYQIKFITGFGA), 914-934 (GSYLALYVIESVCFLGGSWLI), and 939-959 (ATFGEFFQVFFALTLTAVGVT). The 238-residue stretch at 1005-1242 (IELQHVSFRY…SGGAYASLVA (238 aa)) folds into the ABC transporter 2 domain. Residue 1040–1047 (GESGSGKS) coordinates ATP. N-linked (GlcNAc...) asparagine glycans are attached at residues asparagine 1094, asparagine 1193, and asparagine 1244.

The protein belongs to the ABC transporter superfamily. ABCB family. Multidrug resistance exporter (TC 3.A.1.201) subfamily.

The protein localises to the membrane. The sequence is that of ABC transporter B family member 7 (ABCB7) from Arabidopsis thaliana (Mouse-ear cress).